The following is a 180-amino-acid chain: MIISVSGTPGAGKTTVSKLLSERLGYEYVSVKELALSRGIGERVSDEIEIDVDELARVVREEFSGRNVVLDGHLSHFVPADVVIILRAHPRLIAERLKARGYSKKKLAENVEAELVDVILVEALEENERVLEVDTTGKSPEEVVEEILTLLKSGTKKRVGIVDWSEEYDKVVQYLMLGDD.

Residues Gly-10, Gly-12, Lys-13, Thr-14, and Thr-15 each contribute to the ATP site. The interval 30-50 is NMP; the sequence is SVKELALSRGIGERVSDEIEI. The tract at residues 99 to 109 is LID; the sequence is ARGYSKKKLAE. ATP is bound by residues Arg-100 and Lys-138.

Belongs to the adenylate kinase family. AK6 subfamily. Interacts with uS11. Not a structural component of 40S pre-ribosomes, but transiently interacts with them by binding to uS11.

The enzyme catalyses AMP + ATP = 2 ADP. The catalysed reaction is ATP + H2O = ADP + phosphate + H(+). Broad-specificity nucleoside monophosphate (NMP) kinase that catalyzes the reversible transfer of the terminal phosphate group between nucleoside triphosphates and monophosphates. Also has ATPase activity. Involved in the late maturation steps of the 30S ribosomal particles, specifically 16S rRNA maturation. While NMP activity is not required for ribosome maturation, ATPase activity is. Associates transiently with small ribosomal subunit protein uS11. ATP hydrolysis breaks the interaction with uS11. May temporarily remove uS11 from the ribosome to enable a conformational change of the ribosomal RNA that is needed for the final maturation step of the small ribosomal subunit. This Thermococcus onnurineus (strain NA1) protein is Putative adenylate kinase.